The sequence spans 566 residues: Beta-1,2-xylosyltransferease XAX1 (566 aa).

The segment at 1 to 25 (MTSTAYSRPSKLPGGGNGSDRRLPP) is disordered. At 1-43 (MTSTAYSRPSKLPGGGNGSDRRLPPRLMRGLTTKIEPKKLGVG) the chain is on the cytoplasmic side. Residues 44–64 (LLAGCCLALLTYVSLAKLFAI) traverse the membrane as a helical; Signal-anchor for type II membrane protein segment. At 65–566 (YSPVFASTAN…LLQALDRLQQ (502 aa)) the chain is on the lumenal side. The N-linked (GlcNAc...) asparagine glycan is linked to Asn-74. A disordered region spans residues 78-180 (LMQNSPPSSP…AAGGDTKIKC (103 aa)). The segment covering 84 to 94 (PSSPETGPIPP) has biased composition (pro residues). N-linked (GlcNAc...) asparagine glycans are attached at residues Asn-104, Asn-368, Asn-429, Asn-515, and Asn-549.

This sequence belongs to the glycosyltransferase 61 family. In terms of tissue distribution, highly expressed in young panicles.

The protein resides in the golgi apparatus membrane. The protein operates within glycan metabolism. In terms of biological role, glycosyltransferase involved in the xylosylation of xylan, the major hemicellulose (non-cellulosic component) of primary and secondary walls of angiosperms. Possesses beta-1,2-xylosyltransferase activity, transferring xylose from UDP-xylose to the xylan backbone. The sequence is that of Beta-1,2-xylosyltransferease XAX1 from Oryza sativa subsp. japonica (Rice).